The chain runs to 201 residues: LexA repressor (201 aa).

A DNA-binding region (H-T-H motif) is located at residues 28–48 (MRDIAAHLRISGTLGVSKHLT). Active-site for autocatalytic cleavage activity residues include Ser120 and Lys157.

It belongs to the peptidase S24 family. As to quaternary structure, homodimer.

It carries out the reaction Hydrolysis of Ala-|-Gly bond in repressor LexA.. In terms of biological role, represses a number of genes involved in the response to DNA damage (SOS response), including recA and lexA. In the presence of single-stranded DNA, RecA interacts with LexA causing an autocatalytic cleavage which disrupts the DNA-binding part of LexA, leading to derepression of the SOS regulon and eventually DNA repair. This Geobacter metallireducens (strain ATCC 53774 / DSM 7210 / GS-15) protein is LexA repressor.